The chain runs to 654 residues: U-box domain-containing protein 12 (654 aa).

The U-box domain occupies 255 to 329 (IPPEEFRCPI…AQWCESNGIE (75 aa)). The segment at 329–352 (EPPKRPNISQPSSKASSSSSAPDD) is disordered. A compositionally biased stretch (low complexity) spans 337 to 349 (SQPSSKASSSSSA). ARM repeat units follow at residues 387–427 (NHNR…NLSI), 430–469 (ENKGKIVYSSGAVPGIVHVLQKGSMEARENAAATLFSLSV), 471–510 (DENKVTIGAAGAIPPLVTLLSEGSQRGKKDAATALFNLCI), 512–551 (QGNKGKAVRAGLVPVLMRLLTEPESGMVDESLSILAILSS), and 553–592 (PDGKSEVGAADAVPVLVDFIRSGSPRNKENSAAVLVHLCS).

The catalysed reaction is S-ubiquitinyl-[E2 ubiquitin-conjugating enzyme]-L-cysteine + [acceptor protein]-L-lysine = [E2 ubiquitin-conjugating enzyme]-L-cysteine + N(6)-ubiquitinyl-[acceptor protein]-L-lysine.. Its pathway is protein modification; protein ubiquitination. In terms of biological role, functions as an E3 ubiquitin ligase. This is U-box domain-containing protein 12 (PUB12) from Arabidopsis thaliana (Mouse-ear cress).